A 415-amino-acid chain; its full sequence is Phosphoglycerate transport system transcriptional regulatory protein PgtA (415 aa).

The Response regulatory domain occupies Ser-7–Leu-121. Asp-56 is subject to 4-aspartylphosphate. Residues Leu-142–Val-341 enclose the Sigma-54 factor interaction domain. Gly-170–Met-177 provides a ligand contact to ATP. The segment at residues Ile-385–Lys-404 is a DNA-binding region (H-T-H motif).

Phosphorylated by PgtB.

Its subcellular location is the cytoplasm. In terms of biological role, member of the two-component regulatory system PgtB/PgtA that regulates the inducible phosphoglycerate transport system. When activated by PgtB it acts in conjunction with sigma-54 as a transcriptional activator. In Salmonella typhimurium (strain LT2 / SGSC1412 / ATCC 700720), this protein is Phosphoglycerate transport system transcriptional regulatory protein PgtA (pgtA).